An 863-amino-acid polypeptide reads, in one-letter code: Autotaxin (863 aa).

An N-terminal signal peptide occupies residues 1–27 (MARRSSFQSCQIISLFTFAVGVNICLG). Positions 28–35 (FTAHRIKR) are cleaved as a propeptide — removed by furin. Asparagine 54 carries N-linked (GlcNAc...) asparagine glycosylation. SMB domains lie at 55–98 (ISGS…LKTA) and 99–143 (RGWE…GESH). Disulfide bonds link cysteine 59–cysteine 76, cysteine 63–cysteine 94, cysteine 74–cysteine 87, cysteine 80–cysteine 86, cysteine 103–cysteine 120, cysteine 108–cysteine 138, cysteine 118–cysteine 131, cysteine 124–cysteine 130, cysteine 149–cysteine 195, and cysteine 157–cysteine 351. Positions 127–129 (RGD) match the Cell attachment site motif. Residues 145-502 (VDDDCEEIKA…STFKYKTKVP (358 aa)) form a phosphodiesterase region. 2 residues coordinate Zn(2+): aspartate 172 and threonine 210. Catalysis depends on threonine 210, which acts as the Nucleophile. Positions 210, 231, and 312 each coordinate 1-(9Z-octadecenoyl)-sn-glycero-3-phosphate. 1-hexadecanoyl-sn-glycero-3-phosphate is bound by residues threonine 210, asparagine 231, and aspartate 312. Threonine 210, asparagine 231, and aspartate 312 together coordinate 1-tetradecanoyl-sn-glycerol 3-phosphate. Residues aspartate 312, histidine 316, aspartate 359, and histidine 360 each coordinate Zn(2+). 5 disulfide bridges follow: cysteine 367–cysteine 469, cysteine 414–cysteine 806, cysteine 567–cysteine 667, cysteine 569–cysteine 652, and cysteine 775–cysteine 785. N-linked (GlcNAc...) asparagine glycosylation is present at asparagine 411. A Zn(2+)-binding site is contributed by histidine 475. Histidine 475 provides a ligand contact to 1-(9Z-octadecenoyl)-sn-glycero-3-phosphate. Histidine 475 is a 1-hexadecanoyl-sn-glycero-3-phosphate binding site. Histidine 475 lines the 1-tetradecanoyl-sn-glycerol 3-phosphate pocket. Residue asparagine 525 is glycosylated (N-linked (GlcNAc...) asparagine). The nuclease-like domain stretch occupies residues 598 to 863 (LYGRPAVLYR…TYLHTYESEI (266 aa)). Ca(2+) is bound by residues aspartate 740, aspartate 742, aspartate 744, leucine 746, and aspartate 748. The N-linked (GlcNAc...) asparagine glycan is linked to asparagine 807. Residues 830-851 (IEHLTSLDFFRKTSRSYPEILT) form a required for secretion region.

Belongs to the nucleotide pyrophosphatase/phosphodiesterase family. Zn(2+) serves as cofactor. Requires Ca(2+) as cofactor. Post-translationally, N-glycosylation, but not furin-cleavage, plays a critical role on secretion and on lysoPLD activity. The interdomain disulfide bond between Cys-414 and Cys-806 is essential for catalytic activity. Detected in blood plasma (at protein level). Predominantly expressed in brain, placenta, ovary, and small intestine. Expressed in a number of carcinomas such as hepatocellular and prostate carcinoma, neuroblastoma and non-small-cell lung cancer. Expressed in body fluids such as plasma, cerebral spinal fluid (CSF), saliva, follicular and amniotic fluids. Not detected in leukocytes. Isoform 1 is more highly expressed in peripheral tissues than in the central nervous system (CNS). Adipocytes only express isoform 1. Isoform 3 is more highly expressed in the brain than in peripheral tissues.

The protein localises to the secreted. It catalyses the reaction a 1-O-alkyl-sn-glycero-3-phosphoethanolamine + H2O = a 1-O-alkyl-sn-glycero-3-phosphate + ethanolamine + H(+). The catalysed reaction is a 1-acyl-sn-glycero-3-phosphoethanolamine + H2O = a 1-acyl-sn-glycero-3-phosphate + ethanolamine + H(+). The enzyme catalyses 1-(9Z-octadecenoyl)-sn-glycero-3-phosphoethanolamine + H2O = 1-(9Z-octadecenoyl)-sn-glycero-3-phosphate + ethanolamine + H(+). It carries out the reaction a 1-O-alkyl-sn-glycero-3-phosphocholine + H2O = a 1-O-alkyl-sn-glycero-3-phosphate + choline + H(+). It catalyses the reaction 1-O-(9Z-octadecenyl)-sn-glycero-3-phosphocholine + H2O = 1-O-(9Z-octadecenyl)-sn-glycero-3-phosphate + choline + H(+). The catalysed reaction is 1-O-hexadecyl-sn-glycero-3-phosphocholine + H2O = 1-O-hexadecyl-sn-glycero-3-phosphate + choline + H(+). The enzyme catalyses a 1-O-(1Z-alkenyl)-sn-glycero-3-phosphocholine + H2O = a 1-O-(1Z-alkenyl)-sn-glycero-3-phosphate + choline + H(+). It carries out the reaction a 1-acyl-sn-glycero-3-phosphocholine + H2O = a 1-acyl-sn-glycero-3-phosphate + choline + H(+). It catalyses the reaction 1-dodecanoyl-sn-glycero-3-phosphocholine + H2O = 1-dodecanoyl-sn-glycerol 3-phosphate + choline + H(+). The catalysed reaction is 1-(9Z-octadecenoyl)-sn-glycero-3-phosphocholine + H2O = 1-(9Z-octadecenoyl)-sn-glycero-3-phosphate + choline + H(+). The enzyme catalyses 1-tetradecanoyl-sn-glycero-3-phosphocholine + H2O = 1-tetradecanoyl-sn-glycerol 3-phosphate + choline + H(+). It carries out the reaction 1-decanoyl-sn-glycero-3-phosphocholine + H2O = 1-decanoyl-sn-glycero-3-phosphate + choline + H(+). It catalyses the reaction 1-octadecanoyl-sn-glycero-3-phosphocholine + H2O = 1-octadecanoyl-sn-glycero-3-phosphate + choline + H(+). The catalysed reaction is 1-hexadecanoyl-sn-glycero-3-phosphocholine + H2O = 1-hexadecanoyl-sn-glycero-3-phosphate + choline + H(+). The enzyme catalyses 1-hexanoyl-sn-glycero-3-phosphocholine + H2O = 1-hexanoyl-sn-glycero-3-phosphate + choline + H(+). It carries out the reaction 1-(9Z,12Z)-octadecadienoyl-sn-glycero-3-phosphocholine + H2O = 1-(9Z,12Z)-octadecadienoyl-sn-glycero-3-phosphate + choline + H(+). It catalyses the reaction sphing-4-enine-phosphocholine + H2O = sphing-4-enine 1-phosphate + choline + H(+). The catalysed reaction is 1-(5Z,8Z,11Z,14Z-eicosatetraenoyl)-sn-glycero-3-phosphocholine + H2O = 1-(5Z,8Z,11Z,14Z-eicosatetraenoyl)-sn-glycero-3-phosphate + choline + H(+). The enzyme catalyses a 2-acyl-sn-glycero-3-phosphocholine + H2O = a 2-acyl-sn-glycerol 3-phosphate + choline + H(+). It carries out the reaction a 1,2-diacyl-sn-glycero-3-phosphocholine + H2O = a 1,2-diacyl-sn-glycero-3-phosphate + choline + H(+). It catalyses the reaction 1,2-dioctanoyl-sn-glycero-3-phosphocholine + H2O = 1,2-dioctanoyl-sn-glycero-3-phosphate + choline + H(+). The catalysed reaction is 1,2-didecanoyl-sn-glycero-3-phosphocholine + H2O = 1,2-didecanoyl-sn-glycero-3-phosphate + choline + H(+). The enzyme catalyses a 1-acyl-sn-glycero-3-phospho-L-serine + H2O = a 1-acyl-sn-glycero-3-phosphate + L-serine + H(+). It carries out the reaction 1-(9Z-octadecenoyl)-sn-glycero-3-phospho-L-serine + H2O = 1-(9Z-octadecenoyl)-sn-glycero-3-phosphate + L-serine + H(+). It catalyses the reaction a 2-acyl-sn-glycero-3-phospho-L-serine + H2O = a 2-acyl-sn-glycerol 3-phosphate + L-serine + H(+). Inhibited by lysophosphatidic acid (LPA) and sphingosine-1-phosphate (S1P). Inhibited by EDTA and EGTA. In terms of biological role, secreted lysophospholipase D that hydrolyzes lysophospholipids to produce the signaling molecule lysophosphatidic acid (LPA) in extracellular fluids. Its major substrate is lysophosphatidylcholine. Can also act on sphingosylphosphorylcholine producing sphingosine-1-phosphate, a modulator of cell motility. Can hydrolyze, in vitro, bis-pNPP, to some extent pNP-TMP, and barely ATP. Involved in several motility-related processes such as angiogenesis and neurite outgrowth. Acts as an angiogenic factor by stimulating migration of smooth muscle cells and microtubule formation. Stimulates migration of melanoma cells, probably via a pertussis toxin-sensitive G protein. May have a role in induction of parturition. Possible involvement in cell proliferation and adipose tissue development. Required for LPA production in activated platelets, cleaves the sn-1 lysophospholipids to generate sn-1 lysophosphatidic acids containing predominantly 18:2 and 20:4 fatty acids. Shows a preference for the sn-1 to the sn-2 isomer of 1-O-alkyl-sn-glycero-3-phosphocholine (lyso-PAF). The protein is Autotaxin of Homo sapiens (Human).